A 343-amino-acid polypeptide reads, in one-letter code: S-adenosylmethionine:tRNA ribosyltransferase-isomerase (343 aa).

The protein belongs to the QueA family. In terms of assembly, monomer.

It localises to the cytoplasm. The catalysed reaction is 7-aminomethyl-7-carbaguanosine(34) in tRNA + S-adenosyl-L-methionine = epoxyqueuosine(34) in tRNA + adenine + L-methionine + 2 H(+). It functions in the pathway tRNA modification; tRNA-queuosine biosynthesis. Its function is as follows. Transfers and isomerizes the ribose moiety from AdoMet to the 7-aminomethyl group of 7-deazaguanine (preQ1-tRNA) to give epoxyqueuosine (oQ-tRNA). This chain is S-adenosylmethionine:tRNA ribosyltransferase-isomerase, found in Hydrogenobaculum sp. (strain Y04AAS1).